A 217-amino-acid polypeptide reads, in one-letter code: Flagellin B2 (217 aa).

Residues 1–12 constitute a propeptide that is removed on maturation; that stretch reads MKVFEFLKGKRG.

The protein belongs to the archaeal flagellin family.

Its subcellular location is the archaeal flagellum. Its function is as follows. Flagellin is the subunit protein which polymerizes to form the filaments of archaeal flagella. The sequence is that of Flagellin B2 (flaB2) from Methanocaldococcus jannaschii (strain ATCC 43067 / DSM 2661 / JAL-1 / JCM 10045 / NBRC 100440) (Methanococcus jannaschii).